We begin with the raw amino-acid sequence, 509 residues long: 2-isopropylmalate synthase (509 aa).

One can recognise a Pyruvate carboxyltransferase domain in the interval 5–267 (IQIFDTTLRD…QTALNLEETK (263 aa)). The Mn(2+) site is built by Asp14, His202, His204, and Asn238. Positions 391-509 (KLETLQLQYV…AAENVEKVGN (119 aa)) are regulatory domain.

Belongs to the alpha-IPM synthase/homocitrate synthase family. LeuA type 1 subfamily. In terms of assembly, homodimer. Mn(2+) is required as a cofactor.

It is found in the cytoplasm. The catalysed reaction is 3-methyl-2-oxobutanoate + acetyl-CoA + H2O = (2S)-2-isopropylmalate + CoA + H(+). It functions in the pathway amino-acid biosynthesis; L-leucine biosynthesis; L-leucine from 3-methyl-2-oxobutanoate: step 1/4. Functionally, catalyzes the condensation of the acetyl group of acetyl-CoA with 3-methyl-2-oxobutanoate (2-ketoisovalerate) to form 3-carboxy-3-hydroxy-4-methylpentanoate (2-isopropylmalate). The chain is 2-isopropylmalate synthase from Staphylococcus aureus (strain MRSA252).